Consider the following 252-residue polypeptide: Floral homeotic protein AGAMOUS (252 aa).

Residues 19 to 73 (RGKIEIKRIENTTNRQVTFCKRRNGLLKKAYELSVLCDAEVALIVFSSRGRLYEY) form the MADS-box domain. A K-box domain is found at 103–193 (AQYYQQESAK…RAKIAENERN (91 aa)).

The protein localises to the nucleus. Its function is as follows. Probable transcription factor involved in regulating genes that determines stamen and carpel development in wild-type flowers. In Brassica napus (Rape), this protein is Floral homeotic protein AGAMOUS (AG1).